Reading from the N-terminus, the 145-residue chain is Arginine repressor (145 aa).

Belongs to the ArgR family.

It localises to the cytoplasm. The protein operates within amino-acid biosynthesis; L-arginine biosynthesis [regulation]. Its function is as follows. Regulates arginine biosynthesis genes. The protein is Arginine repressor of Streptococcus mutans serotype c (strain ATCC 700610 / UA159).